Consider the following 537-residue polypeptide: Copine-1 (537 aa).

C2 domains lie at 1–114 (MAHC…TLPL) and 123–245 (GRGT…ECIH). Positions 21, 27, 80, 82, 92, 153, and 159 each coordinate Ca(2+). At lysine 171 the chain carries N6-acetyllysine. The Ca(2+) site is built by aspartate 214, aspartate 216, and aspartate 222. The VWFA domain maps to 285–505 (NFTVGVDFTG…ALAQTVLAEV (221 aa)).

Belongs to the copine family. In terms of assembly, homodimer; homodimerizes via its C2 domains. Interacts with p65/RELA (via N-terminus); this interaction induces proteolytic cleavage of p65/RELA subunit and inhibition of NF-kappa-B transcriptional activity. Interacts (via VWFA domain) with ACTB, CCDC22, MYCBP2, PPP5C, RDX and UBE2O. Ca(2+) is required as a cofactor. In terms of tissue distribution, expressed in liver, spleen, muscle, testis, adrenal (at protein level).

The protein resides in the nucleus. Its subcellular location is the cytoplasm. It is found in the cell membrane. Its function is as follows. Calcium-dependent phospholipid-binding protein that plays a role in calcium-mediated intracellular processes. Involved in the TNF-alpha receptor signaling pathway in a calcium-dependent manner. Exhibits calcium-dependent phospholipid binding properties. Plays a role in neuronal progenitor cell differentiation; induces neurite outgrowth via a AKT-dependent signaling cascade and calcium-independent manner. May recruit target proteins to the cell membrane in a calcium-dependent manner. May function in membrane trafficking. Involved in TNF-alpha-induced NF-kappa-B transcriptional repression by inducing endoprotease processing of the transcription factor NF-kappa-B p65/RELA subunit. Also induces endoprotease processing of NF-kappa-B p50/NFKB1, p52/NFKB2, RELB and REL. The sequence is that of Copine-1 from Bos taurus (Bovine).